A 173-amino-acid chain; its full sequence is Lipoprotein signal peptidase (173 aa).

The next 2 helical transmembrane spans lie at 67 to 87 (WISL…PHLG) and 92 to 112 (MGFG…FAFG). Residues Asp116 and Asp132 contribute to the active site. Residues 125-145 (FPVFNGADIAINLGLACLLIG) traverse the membrane as a helical segment. Residues 151 to 173 (SRTPAPARPASKQIREPTDTTGG) are disordered. Residues 163–173 (QIREPTDTTGG) show a composition bias toward basic and acidic residues.

The protein belongs to the peptidase A8 family.

The protein resides in the cell inner membrane. It carries out the reaction Release of signal peptides from bacterial membrane prolipoproteins. Hydrolyzes -Xaa-Yaa-Zaa-|-(S,diacylglyceryl)Cys-, in which Xaa is hydrophobic (preferably Leu), and Yaa (Ala or Ser) and Zaa (Gly or Ala) have small, neutral side chains.. The protein operates within protein modification; lipoprotein biosynthesis (signal peptide cleavage). Its function is as follows. This protein specifically catalyzes the removal of signal peptides from prolipoproteins. This chain is Lipoprotein signal peptidase, found in Gloeobacter violaceus (strain ATCC 29082 / PCC 7421).